Here is a 190-residue protein sequence, read N- to C-terminus: Anthranilate synthase component II (190 aa).

The 190-residue stretch at methionine 1–alanine 190 folds into the Glutamine amidotransferase type-1 domain. Glycine 51–glycine 53 lines the L-glutamine pocket. Cysteine 76 (nucleophile; for GATase activity) is an active-site residue. L-glutamine is bound by residues glutamine 80 and serine 126 to leucine 127. Active-site residues include histidine 167 and glutamate 169.

In terms of assembly, tetramer of two components I and two components II.

It carries out the reaction chorismate + L-glutamine = anthranilate + pyruvate + L-glutamate + H(+). The protein operates within amino-acid biosynthesis; L-tryptophan biosynthesis; L-tryptophan from chorismate: step 1/5. The sequence is that of Anthranilate synthase component II (trpG2) from Haloarcula marismortui (strain ATCC 43049 / DSM 3752 / JCM 8966 / VKM B-1809) (Halobacterium marismortui).